Here is an 83-residue protein sequence, read N- to C-terminus: uncharacterized protein (83 aa).

The chain crosses the membrane as a helical span at residues 50–70 (IMVFLGEAWIILIPFAIFCII).

This sequence belongs to the plectrovirus ORF7 family.

The protein resides in the host membrane. This is an uncharacterized protein from Spiroplasma citri (SpV1).